The following is a 373-amino-acid chain: Innexin shaking-B (373 aa).

Residues 1–21 lie on the Cytoplasmic side of the membrane; that stretch reads MLDIFRGLKSLVKISHVNTDS. The chain crosses the membrane as a helical span at residues 22–42; it reads PVFRLHYSITVIILMSFSLIV. At 43–106 the chain is on the extracellular side; that stretch reads TTRQYVGNPI…SAEATAADKK (64 aa). Residues 107–127 form a helical membrane-spanning segment; the sequence is IYKYYQWVCFCLFFQAILFYT. The Cytoplasmic segment spans residues 128–176; the sequence is PRWLWKSWEGGKIHALMMDLDIGICSEIEKKQKKKLLLDYLWDNLRYHN. The chain crosses the membrane as a helical span at residues 177–199; sequence WWAYRYYVCEFLSLCNVIGQMFL. The Extracellular segment spans residues 200–268; sequence MNRFFDGEFM…ILPLNVVNEK (69 aa). A helical transmembrane segment spans residues 269–289; the sequence is IYIFLWFWFIILTILTTLTIF. At 290-373 the chain is on the cytoplasmic side; sequence YRIIIIFSPR…PGMKGEIQDA (84 aa).

The protein belongs to the pannexin family. In terms of assembly, monomer.

Its subcellular location is the cell membrane. The protein localises to the cell junction. The protein resides in the gap junction. Functionally, structural component of the gap junctions at electrical synapses in distal and mid-depth levels in the lamina. The protein is Innexin shaking-B of Anopheles gambiae (African malaria mosquito).